Consider the following 396-residue polypeptide: Serine/threonine-protein kinase GRIK1 (396 aa).

The segment at 22–65 is disordered; sequence ERSRHSPNPYDDDTYSHDSGETSNPGGDDEEGEEEEEVEELSRS. Residues 48 to 60 are compositionally biased toward acidic residues; the sequence is GDDEEGEEEEEVE. Residues 108 to 369 enclose the Protein kinase domain; sequence FVRERKIGSG…LKAVAEHPWI (262 aa). ATP-binding positions include 114–122 and Lys-137; that span reads IGSGSYGKV. Thr-154 is subject to Phosphothreonine; by autocatalysis. The Proton acceptor role is filled by Asp-239. Residue Ser-261 is modified to Phosphoserine; by KIN10.

The protein belongs to the protein kinase superfamily. Ser/Thr protein kinase family. In terms of assembly, associates with the SNF1-related protein kinase (SnRK) complex. Interacts with AL1, a geminivirus (TGMV) protein essential for viral replication. Expressed in shoot apical meristem, leaf primordium and emerging petiole (at protein level).

The protein localises to the cytoplasm. It is found in the nucleus. The catalysed reaction is L-seryl-[protein] + ATP = O-phospho-L-seryl-[protein] + ADP + H(+). It catalyses the reaction L-threonyl-[protein] + ATP = O-phospho-L-threonyl-[protein] + ADP + H(+). With respect to regulation, activated when autophosphorylated at Thr-154 and inactivated when phosphorylated at Ser-261 by SnRK1.1/KIN10. Its function is as follows. Activates SnRK1.1/KIN10 and SnRK1.2/KIN11 by phosphorylation of their activation-loop 'Thr-198' and 'Thr-176', respectively. Required for the regulation by SnRK1 kinases of the transcription of a large set of genes, the modification the activity of metabolic enzymes, and the control of various nutrient-responsive cellular developmental processes. The chain is Serine/threonine-protein kinase GRIK1 (GRIK1) from Arabidopsis thaliana (Mouse-ear cress).